The chain runs to 509 residues: MRRQSRIVASLLVLACASSGAFAHRKFNVHDDLLAYPQFRIKFPDGFILESQARAFLEQAPYSSPDLNDISEQTPLKDESEESIRDGSSGEKAKFSYEELSLEGQRYLCQIPVVEDGDSNRTKVEVNEEEERKELARATDRGLELLREMEGKCLYYISGWWSYSFCYMNQIKQFHALPSGGGVPNYPPMEDHTTHSFILGRFPQEEGQDEGKGAKSGKSSTELAELQTKGGSRYLVQRLESGDQCDLTGKNRKIEVQFHCNPQSTDRIAWIKELYTCSYLMLIYTPRLCNDVAFLPPQQEEVHTIECREILTPEEVTGWQAMHEYQLSQQLVESAEAPKHQVIGGIEVGAQRLVGTEGKRIEKGRVASIGEEKVDVVAKRVNGEVQLLSAEELKKFDLDEAKIEELRKKLEEWAKGKDWTLEIVTGNGAYLRGVVDTDEDEEDGYENEEGETDKREQRENTQETTGQPGQPGHQEETESGQAGHPMDDRSEDGEDPDVDGSEEIFKDEL.

Positions 1 to 23 (MRRQSRIVASLLVLACASSGAFA) are cleaved as a signal peptide. A compositionally biased stretch (polar residues) spans 64–74 (SPDLNDISEQT). The disordered stretch occupies residues 64–91 (SPDLNDISEQTPLKDESEESIRDGSSGE). Positions 75–91 (PLKDESEESIRDGSSGE) are enriched in basic and acidic residues. The N-linked (GlcNAc...) asparagine glycan is linked to Asn120. Residues 151 to 291 (GKCLYYISGW…LIYTPRLCND (141 aa)) form the MRH domain. Cys153 and Cys166 are joined by a disulfide. Residues Trp160, Trp161, Gln173, Asp246, Arg252, Glu273, and Tyr279 each coordinate a mannooligosaccharide derivative. 2 cysteine pairs are disulfide-bonded: Cys245-Cys277 and Cys260-Cys289. The disordered stretch occupies residues 433–509 (GVVDTDEDEE…GSEEIFKDEL (77 aa)). The span at 436–451 (DTDEDEEDGYENEEGE) shows a compositional bias: acidic residues. Residues 452-461 (TDKREQRENT) are compositionally biased toward basic and acidic residues. Acidic residues predominate over residues 489 to 502 (RSEDGEDPDVDGSE). The Prevents secretion from ER motif lies at 506–509 (KDEL).

Belongs to the OS-9 family. Interacts with missfolded ER lumenal proteins.

The protein resides in the endoplasmic reticulum membrane. Its function is as follows. Lectin involved in the quality control of the secretory pathway. As a member of the endoplasmic reticulum-associated degradation lumenal (ERAD-L) surveillance system, targets misfolded endoplasmic reticulum lumenal glycoproteins for degradation. The protein is Protein OS-9 homolog (yos9) of Emericella nidulans (strain FGSC A4 / ATCC 38163 / CBS 112.46 / NRRL 194 / M139) (Aspergillus nidulans).